Reading from the N-terminus, the 143-residue chain is Transcriptional regulator MraZ (143 aa).

SpoVT-AbrB domains are found at residues 5-47 (THTP…PMQE) and 76-119 (ASSE…DLRT).

Belongs to the MraZ family. As to quaternary structure, forms oligomers.

The protein localises to the cytoplasm. Its subcellular location is the nucleoid. This chain is Transcriptional regulator MraZ, found in Kineococcus radiotolerans (strain ATCC BAA-149 / DSM 14245 / SRS30216).